The primary structure comprises 317 residues: Transaldolase (317 aa).

The active-site Schiff-base intermediate with substrate is Lys126.

It belongs to the transaldolase family. Type 1 subfamily. As to quaternary structure, homodimer.

The protein localises to the cytoplasm. The catalysed reaction is D-sedoheptulose 7-phosphate + D-glyceraldehyde 3-phosphate = D-erythrose 4-phosphate + beta-D-fructose 6-phosphate. Its pathway is carbohydrate degradation; pentose phosphate pathway; D-glyceraldehyde 3-phosphate and beta-D-fructose 6-phosphate from D-ribose 5-phosphate and D-xylulose 5-phosphate (non-oxidative stage): step 2/3. Functionally, transaldolase is important for the balance of metabolites in the pentose-phosphate pathway. The protein is Transaldolase of Paraburkholderia xenovorans (strain LB400).